A 353-amino-acid polypeptide reads, in one-letter code: N-acetyl-gamma-glutamyl-phosphate reductase (353 aa).

Cys-155 is a catalytic residue.

This sequence belongs to the NAGSA dehydrogenase family. Type 1 subfamily.

It is found in the cytoplasm. It catalyses the reaction N-acetyl-L-glutamate 5-semialdehyde + phosphate + NADP(+) = N-acetyl-L-glutamyl 5-phosphate + NADPH + H(+). Its pathway is amino-acid biosynthesis; L-arginine biosynthesis; N(2)-acetyl-L-ornithine from L-glutamate: step 3/4. Its function is as follows. Catalyzes the NADPH-dependent reduction of N-acetyl-5-glutamyl phosphate to yield N-acetyl-L-glutamate 5-semialdehyde. The sequence is that of N-acetyl-gamma-glutamyl-phosphate reductase from Microcystis aeruginosa (strain NIES-843 / IAM M-2473).